The primary structure comprises 364 residues: Paraneoplastic antigen Ma2 (364 aa).

The residue at position 2 (alanine 2) is an N-acetylalanine. The span at 335–351 (EEEEASFENESIEEPEE) shows a compositional bias: acidic residues. The segment at 335–364 (EEEEASFENESIEEPEERDGYGRWNHEGDD) is disordered. Residues 352 to 364 (RDGYGRWNHEGDD) are compositionally biased toward basic and acidic residues.

Belongs to the PNMA family. As to expression, brain-specific. In some cancer patients, specifically expressed by testicular tumor cells.

It localises to the nucleus. The protein localises to the nucleolus. The protein is Paraneoplastic antigen Ma2 (PNMA2) of Homo sapiens (Human).